The following is a 138-amino-acid chain: Basic phospholipase A2 chain HDP-1P (138 aa).

The N-terminal stretch at 1-16 is a signal peptide; the sequence is MRILWIVAVCLIGVEG. Disulfide bonds link Cys-42/Cys-131, Cys-44/Cys-60, Cys-59/Cys-111, Cys-65/Cys-138, Cys-66/Cys-104, Cys-73/Cys-97, and Cys-91/Cys-102. Residues Tyr-43, Gly-45, and Gly-47 each coordinate Ca(2+). The active site involves His-63. Asp-64 lines the Ca(2+) pocket. Asp-105 is an active-site residue.

Heterodimer; non-covalently linked. The toxic basic protein has phospholipase A2 activity (chain HDP-1P) and the non-toxic acidic protein functions as its inhibitor (chain HPD-1I (AC A4VBF0)). Ca(2+) is required as a cofactor. In terms of tissue distribution, expressed by the venom gland.

The protein localises to the secreted. The catalysed reaction is a 1,2-diacyl-sn-glycero-3-phosphocholine + H2O = a 1-acyl-sn-glycero-3-phosphocholine + a fatty acid + H(+). Its activity is regulated as follows. Enzymatic activity and neurotoxicity are inhibited by Triton X-100, which has been determined to be located in the center of the hydrophobic channel of the enzyme. Functionally, heterodimer: shows the same activities as the monomer, but with a lower potency. Its function is as follows. Monomer: snake venom phospholipase A2 (PLA2) that shows presynaptic neurotoxicity, anticoagulant activity and that weakly inhibits ADP-induced platelet aggregation. Inhibits exocytosis in pancreatic beta cells, confirming it can act presynaptically in inhibiting the exocytosis of neurotransmitters in neurons. PLA2 catalyzes the calcium-dependent hydrolysis of the 2-acyl groups in 3-sn-phosphoglycerides. The chain is Basic phospholipase A2 chain HDP-1P from Vipera nikolskii (Nikolsky's adder).